The following is a 387-amino-acid chain: Phosphoglycerate kinase (387 aa).

Substrate contacts are provided by residues 21–23, arginine 36, and 59–62; these read DLN and HLGR. Position 84 is an N6-acetyllysine (lysine 84). 2 residues coordinate substrate: arginine 113 and arginine 146. ATP is bound by residues lysine 197, glutamate 314, and 340-343; that span reads GGDT.

The protein belongs to the phosphoglycerate kinase family. As to quaternary structure, monomer.

The protein resides in the cytoplasm. It catalyses the reaction (2R)-3-phosphoglycerate + ATP = (2R)-3-phospho-glyceroyl phosphate + ADP. The protein operates within carbohydrate degradation; glycolysis; pyruvate from D-glyceraldehyde 3-phosphate: step 2/5. This is Phosphoglycerate kinase from Shigella sonnei (strain Ss046).